A 218-amino-acid polypeptide reads, in one-letter code: Hypoxanthine-guanine phosphoribosyltransferase (218 aa).

Ala-2 is modified (N-acetylalanine). Lys-69 contacts GMP. Lys-103 carries the N6-acetyllysine modification. Lys-115 participates in a covalent cross-link: Glycyl lysine isopeptide (Lys-Gly) (interchain with G-Cter in SUMO1); alternate. Lys-115 is covalently cross-linked (Glycyl lysine isopeptide (Lys-Gly) (interchain with G-Cter in SUMO2); alternate). GMP is bound by residues 134 to 142 (EDIIDTGKT), Lys-166, 186 to 188 (KFV), and Asp-194. Asp-138 functions as the Proton acceptor in the catalytic mechanism. A Phosphothreonine modification is found at Thr-142. Asp-194 is a binding site for Mg(2+).

This sequence belongs to the purine/pyrimidine phosphoribosyltransferase family. In terms of assembly, homotetramer. The cofactor is Mg(2+).

It localises to the cytoplasm. It catalyses the reaction IMP + diphosphate = hypoxanthine + 5-phospho-alpha-D-ribose 1-diphosphate. It carries out the reaction GMP + diphosphate = guanine + 5-phospho-alpha-D-ribose 1-diphosphate. The protein operates within purine metabolism; IMP biosynthesis via salvage pathway; IMP from hypoxanthine: step 1/1. Its function is as follows. Converts guanine to guanosine monophosphate, and hypoxanthine to inosine monophosphate. Transfers the 5-phosphoribosyl group from 5-phosphoribosylpyrophosphate onto the purine. Plays a central role in the generation of purine nucleotides through the purine salvage pathway. The chain is Hypoxanthine-guanine phosphoribosyltransferase (HPRT1) from Bos taurus (Bovine).